Reading from the N-terminus, the 491-residue chain is Nucleotidyltransferase MB21D2 (491 aa).

Positions 431 to 442 are enriched in polar residues; that stretch reads RGSTTSIPSPQS. Residues 431–452 are disordered; the sequence is RGSTTSIPSPQSDGGDPNQPDD. Position 435 is a phosphothreonine (Thr-435). Phosphoserine is present on residues Ser-436, Ser-439, and Ser-442.

This sequence belongs to the mab-21 family.

Its function is as follows. Probable nucleotidyltransferase that catalyzes the formation of cyclic dinucleotide second messenger in response to some unknown stimulus. The protein is Nucleotidyltransferase MB21D2 of Homo sapiens (Human).